The sequence spans 746 residues: 1,4-alpha-glucan branching enzyme GlgB (746 aa).

The active-site Nucleophile is the D418. E471 serves as the catalytic Proton donor.

It belongs to the glycosyl hydrolase 13 family. GlgB subfamily. In terms of assembly, monomer.

It catalyses the reaction Transfers a segment of a (1-&gt;4)-alpha-D-glucan chain to a primary hydroxy group in a similar glucan chain.. Its pathway is glycan biosynthesis; glycogen biosynthesis. Its function is as follows. Catalyzes the formation of the alpha-1,6-glucosidic linkages in glycogen by scission of a 1,4-alpha-linked oligosaccharide from growing alpha-1,4-glucan chains and the subsequent attachment of the oligosaccharide to the alpha-1,6 position. In Nitrosospira multiformis (strain ATCC 25196 / NCIMB 11849 / C 71), this protein is 1,4-alpha-glucan branching enzyme GlgB.